A 658-amino-acid polypeptide reads, in one-letter code: DNA ligase (658 aa).

NAD(+) is bound by residues 32 to 36 and 81 to 82; these read DAVYD and SL. Lys-112 acts as the N6-AMP-lysine intermediate in catalysis. Positions 133, 167, and 306 each coordinate NAD(+). Zn(2+)-binding residues include Cys-400, Cys-403, Cys-416, and Cys-421. Positions 577 to 658 constitute a BRCT domain; sequence ESSSVFNNKT…LKRLKKLDQN (82 aa).

The protein belongs to the NAD-dependent DNA ligase family. LigA subfamily. It depends on Mg(2+) as a cofactor. Mn(2+) serves as cofactor.

It catalyses the reaction NAD(+) + (deoxyribonucleotide)n-3'-hydroxyl + 5'-phospho-(deoxyribonucleotide)m = (deoxyribonucleotide)n+m + AMP + beta-nicotinamide D-nucleotide.. Its function is as follows. DNA ligase that catalyzes the formation of phosphodiester linkages between 5'-phosphoryl and 3'-hydroxyl groups in double-stranded DNA using NAD as a coenzyme and as the energy source for the reaction. It is essential for DNA replication and repair of damaged DNA. The sequence is that of DNA ligase from Helicobacter pylori (strain G27).